The following is a 790-amino-acid chain: Vacuolar protein sorting-associated protein 35C (790 aa).

An N-acetylmethionine modification is found at methionine 1.

This sequence belongs to the VPS35 family. In terms of assembly, component of the retromer complex which consists of VPS29 (MAG1), VPS26 (VPS26A or VPS26B), VPS35 (VPS35A or VPS35B or VPS35C), VPS5/17 (SNX1 or SNX2A or SNX2B). Component of a retromer subcomplex consisting of VPS29 (MAG1), VPS26 (VPS26A or VPS26B), VPS35 (VPS35A or VPS35B or VPS35C).

It is found in the cytoplasm. The protein resides in the endosome membrane. Its subcellular location is the prevacuolar compartment membrane. The protein localises to the golgi apparatus. It localises to the trans-Golgi network membrane. In terms of biological role, plays a role in vesicular protein sorting. Component of the membrane-associated retromer complex which is essential in endosome-to-Golgi retrograde transport. Also involved in the efficient sorting of seed storage proteins. The VPS29-VPS26-VPS35 subcomplex may be involved in recycling of specific cargos from endosome to the plasma membrane. The polypeptide is Vacuolar protein sorting-associated protein 35C (VPS35C) (Arabidopsis thaliana (Mouse-ear cress)).